Reading from the N-terminus, the 342-residue chain is DNA-directed RNA polymerase subunit alpha (342 aa).

Residues M1–Q239 form an alpha N-terminal domain (alpha-NTD) region. Positions I254–Y342 are alpha C-terminal domain (alpha-CTD).

It belongs to the RNA polymerase alpha chain family. As to quaternary structure, homodimer. The RNAP catalytic core consists of 2 alpha, 1 beta, 1 beta' and 1 omega subunit. When a sigma factor is associated with the core the holoenzyme is formed, which can initiate transcription.

The catalysed reaction is RNA(n) + a ribonucleoside 5'-triphosphate = RNA(n+1) + diphosphate. Functionally, DNA-dependent RNA polymerase catalyzes the transcription of DNA into RNA using the four ribonucleoside triphosphates as substrates. The protein is DNA-directed RNA polymerase subunit alpha of Orientia tsutsugamushi (strain Ikeda) (Rickettsia tsutsugamushi).